The chain runs to 206 residues: Small ribosomal subunit protein uS4B (206 aa).

The S4 RNA-binding domain maps to 96 to 156; sequence GRLDNVVYRM…EKAKKQSRIG (61 aa).

It belongs to the universal ribosomal protein uS4 family. In terms of assembly, part of the 30S ribosomal subunit. Contacts protein S5. The interaction surface between S4 and S5 is involved in control of translational fidelity.

Functionally, one of the primary rRNA binding proteins, it binds directly to 16S rRNA where it nucleates assembly of the body of the 30S subunit. With S5 and S12 plays an important role in translational accuracy. The chain is Small ribosomal subunit protein uS4B from Psychromonas ingrahamii (strain DSM 17664 / CCUG 51855 / 37).